The sequence spans 232 residues: Pirin-like protein CC_1473 (232 aa).

It belongs to the pirin family.

The protein is Pirin-like protein CC_1473 of Caulobacter vibrioides (strain ATCC 19089 / CIP 103742 / CB 15) (Caulobacter crescentus).